Consider the following 531-residue polypeptide: Putative cysteine ligase BshC (531 aa).

A coiled-coil region spans residues 447–481 (KAQEKKQTKGLDNLEKRLLKAEKKMHSEKLKKIIE).

Belongs to the BshC family.

This is Putative cysteine ligase BshC from Flavobacterium psychrophilum (strain ATCC 49511 / DSM 21280 / CIP 103535 / JIP02/86).